An 89-amino-acid polypeptide reads, in one-letter code: Dynein light chain 1, cytoplasmic (89 aa).

This sequence belongs to the dynein light chain family. As to quaternary structure, interacts with spn-F. Forms ternary complexes with spn-F and IKKepsilon. In terms of tissue distribution, ubiquitous.

The protein resides in the cytoplasm. It localises to the cytoskeleton. In terms of biological role, acts as a non-catalytic accessory component of a dynein complex. In Drosophila melanogaster (Fruit fly), this protein is Dynein light chain 1, cytoplasmic (ctp).